A 342-amino-acid chain; its full sequence is GTPase Obg (342 aa).

One can recognise an Obg domain in the interval 1–159 (MQFIDQAQIE…KLLRLELKLL (159 aa)). Residues 160-330 (AEVGIIGLPN…MLQEVWGILD (171 aa)) form the OBG-type G domain. Residues 166-173 (GLPNAGKS), 191-195 (FTTLI), 213-216 (DIPG), 280-283 (NKID), and 311-313 (SAV) each bind GTP. 2 residues coordinate Mg(2+): serine 173 and threonine 193.

The protein belongs to the TRAFAC class OBG-HflX-like GTPase superfamily. OBG GTPase family. As to quaternary structure, monomer. Requires Mg(2+) as cofactor.

The protein resides in the cytoplasm. Its function is as follows. An essential GTPase which binds GTP, GDP and possibly (p)ppGpp with moderate affinity, with high nucleotide exchange rates and a fairly low GTP hydrolysis rate. Plays a role in control of the cell cycle, stress response, ribosome biogenesis and in those bacteria that undergo differentiation, in morphogenesis control. This is GTPase Obg from Trichormus variabilis (strain ATCC 29413 / PCC 7937) (Anabaena variabilis).